Reading from the N-terminus, the 263-residue chain is tRNA (guanine-N(1)-)-methyltransferase (263 aa).

Residues G124 and L144 to L149 each bind S-adenosyl-L-methionine.

This sequence belongs to the RNA methyltransferase TrmD family. Homodimer.

The protein localises to the cytoplasm. It carries out the reaction guanosine(37) in tRNA + S-adenosyl-L-methionine = N(1)-methylguanosine(37) in tRNA + S-adenosyl-L-homocysteine + H(+). Its function is as follows. Specifically methylates guanosine-37 in various tRNAs. The chain is tRNA (guanine-N(1)-)-methyltransferase from Aromatoleum aromaticum (strain DSM 19018 / LMG 30748 / EbN1) (Azoarcus sp. (strain EbN1)).